Reading from the N-terminus, the 332-residue chain is Malate dehydrogenase (332 aa).

Residues 11–16 and Asp-35 contribute to the NAD(+) site; that span reads GAGNVG. Substrate contacts are provided by Arg-97 and Arg-103. NAD(+) contacts are provided by residues Asn-110 and 133–135; that span reads VTN. Residues Asn-135 and Arg-166 each coordinate substrate. Residue His-190 is the Proton acceptor of the active site.

Belongs to the LDH/MDH superfamily. MDH type 3 family.

The catalysed reaction is (S)-malate + NAD(+) = oxaloacetate + NADH + H(+). In terms of biological role, catalyzes the reversible oxidation of malate to oxaloacetate. This is Malate dehydrogenase from Hydrogenobaculum sp. (strain Y04AAS1).